The sequence spans 464 residues: tRNA modification GTPase MnmE (464 aa).

The (6S)-5-formyl-5,6,7,8-tetrahydrofolate site is built by arginine 25, glutamate 87, and lysine 130. Positions 226–386 constitute a TrmE-type G domain; the sequence is GLSVVLAGQP…LRAELLRIAG (161 aa). Asparagine 236 is a binding site for K(+). Residues 236–241, 255–261, and 280–283 each bind GTP; these read NVGKSS, TPIAGTT, and DTAG. Serine 240 lines the Mg(2+) pocket. The K(+) site is built by threonine 255, isoleucine 257, and threonine 260. Residue threonine 261 participates in Mg(2+) binding. Residue lysine 464 coordinates (6S)-5-formyl-5,6,7,8-tetrahydrofolate.

Belongs to the TRAFAC class TrmE-Era-EngA-EngB-Septin-like GTPase superfamily. TrmE GTPase family. In terms of assembly, homodimer. Heterotetramer of two MnmE and two MnmG subunits. It depends on K(+) as a cofactor.

The protein localises to the cytoplasm. In terms of biological role, exhibits a very high intrinsic GTPase hydrolysis rate. Involved in the addition of a carboxymethylaminomethyl (cmnm) group at the wobble position (U34) of certain tRNAs, forming tRNA-cmnm(5)s(2)U34. The protein is tRNA modification GTPase MnmE of Burkholderia ambifaria (strain MC40-6).